Reading from the N-terminus, the 557-residue chain is MAPSNIVVQSSSTPPVAGGDEEFAPSVWGDFFVTYATPVSQASEQRMSERAELLKAQVRQAFDAASMDVAGLITYVDTLERLGLDNHFRDLIGAALERIGAEELPEHGGGLHIVALRFRLLRQHGIWVSTDVFDAFREDAGGFCSSLCSDDPRGLLSLYNAAHMAVPGEVVLDDAIAFARGRLLDIISKGEVRSPVSEQITRALDIPLPRFTRRLETMHYIAEYEHEEAHDGLLLELARLNFVLVRALHLRELKDLSLWWRELYNTVKLPYARDRMVEIYFWTCGMLHEEEYSLARMFFAKTFGMVSLMDDTFDVHATLDECHKLKEAMQRWDESEVSILPEYLRLLYIKTLSNFKEFEEILEPNKKYRMAYTKEAYKLCSKNYLKEAIWSNQKYQPSFKEHEELSIMTSGLPMLTILTLMGFGDEATPEAFEWVSSVPEMVRAGSQVTRFLNDLSSYKLGKNKKDMPGSVETYMVENGLTGDEAAAAIAALLENRWRILNQTRMEIDHTLLPAAQVVLNMARANEIIYLHGRDAYTFGADLKDLVTTLFLKQVLPL.

Mg(2+)-binding residues include D310 and D314. Substrate contacts are provided by D310, D314, R450, and N453. The DDXXD motif motif lies at 310-314; it reads DDTFD. Residues N453 and S457 each contribute to the Mg(2+) site.

It belongs to the terpene synthase family. In terms of assembly, monomer. Requires Mg(2+) as cofactor. It depends on Mn(2+) as a cofactor. As to expression, specifically expressed in roots.

It is found in the cytoplasm. The catalysed reaction is (2E,6E)-farnesyl diphosphate + 2 H2O = 7-epi-ent-eudesmane-5,11-diol + diphosphate. Its pathway is secondary metabolite biosynthesis; terpenoid biosynthesis. Component of the volatile terpenes biosynthesis pathways. Dihydroxylated sesquiterpenoid synthase that generates dually hydroxylated products directly from (E,E)-farnesyl diphosphate, primarily eudesmane-2,11-diol, along with two closely related structural isomers. The sequence is that of Eudesmanediol synthase from Zea mays (Maize).